A 238-amino-acid polypeptide reads, in one-letter code: MKLLISNQYGAIVMALVPFIYGMLLANPVWAHIFLLLGWFSLYLMTYPFLNLFKGKNLELYKKWSVIYFAAAVIFAIPALIYNWQVLYFMFAMLPFVAVNIYFTKKKDERNLWNDLAGILIFALAGMGSYYFSDRTFDEKILWVAIYPTLFFIGTTLYVKSMMRERKNPRYFWASVIFHLLCALIFVVSQQFILALAFVPGLVRAVYLPTKKLSVMQVGLIEFAITAVFFILLLVATL.

Transmembrane regions (helical) follow at residues 19–39 (FIYGMLLANPVWAHIFLLLGW), 64–84 (WSVIYFAAAVIFAIPALIYNW), 85–105 (QVLYFMFAMLPFVAVNIYFTK), 112–132 (LWNDLAGILIFALAGMGSYYF), 141–161 (ILWVAIYPTLFFIGTTLYVKS), 176–196 (VIFHLLCALIFVVSQQFILAL), and 218–238 (VGLIEFAITAVFFILLLVATL).

This sequence to B.subtilis YwiC.

Its subcellular location is the cell membrane. This is an uncharacterized protein from Haemophilus influenzae (strain ATCC 51907 / DSM 11121 / KW20 / Rd).